The primary structure comprises 94 residues: Large ribosomal subunit protein uL23 (94 aa).

Belongs to the universal ribosomal protein uL23 family. As to quaternary structure, part of the 50S ribosomal subunit. Contacts protein L29, and trigger factor when it is bound to the ribosome.

One of the early assembly proteins it binds 23S rRNA. One of the proteins that surrounds the polypeptide exit tunnel on the outside of the ribosome. Forms the main docking site for trigger factor binding to the ribosome. The polypeptide is Large ribosomal subunit protein uL23 (Listeria innocua serovar 6a (strain ATCC BAA-680 / CLIP 11262)).